A 537-amino-acid chain; its full sequence is Apolipoprotein N-acyltransferase (537 aa).

6 helical membrane-spanning segments follow: residues 10 to 30 (IALA…ITAG), 37 to 57 (LAPF…VWLI), 76 to 96 (YWFG…AFFV), 107 to 127 (FAVL…FALA), 181 to 201 (IGLW…ATLI), and 210 to 230 (AWRA…FGAI). A CN hydrolase domain is found at 248-501 (MQPNLQQDAK…EGILDASLPA (254 aa)). Residue Glu-295 is the Proton acceptor of the active site. Lys-360 is a catalytic residue. Catalysis depends on Cys-413, which acts as the Nucleophile. The helical transmembrane segment at 507 to 527 (IYARVGDVPAAVLVALAVLLA) threads the bilayer.

It belongs to the CN hydrolase family. Apolipoprotein N-acyltransferase subfamily.

The protein localises to the cell inner membrane. The enzyme catalyses N-terminal S-1,2-diacyl-sn-glyceryl-L-cysteinyl-[lipoprotein] + a glycerophospholipid = N-acyl-S-1,2-diacyl-sn-glyceryl-L-cysteinyl-[lipoprotein] + a 2-acyl-sn-glycero-3-phospholipid + H(+). It functions in the pathway protein modification; lipoprotein biosynthesis (N-acyl transfer). Functionally, catalyzes the phospholipid dependent N-acylation of the N-terminal cysteine of apolipoprotein, the last step in lipoprotein maturation. The protein is Apolipoprotein N-acyltransferase of Bradyrhizobium diazoefficiens (strain JCM 10833 / BCRC 13528 / IAM 13628 / NBRC 14792 / USDA 110).